The sequence spans 458 residues: Bifunctional thioredoxin reductase/thioredoxin (458 aa).

The thioredoxin reductase stretch occupies residues 1 to 321; it reads MNTTPSAHET…LAEHAGSKAN (321 aa). Residues 19–22, 41–48, Asn-57, and Val-90 contribute to the FAD site; these read SGPA and EGTSFGGA. The cysteines at positions 142 and 145 are disulfide-linked. The NADP(+) site is built by Ser-163, His-182, Arg-188, Ile-245, and Tyr-265. FAD is bound by residues Asp-285 and 292–295; that span reads RQAI. Position 292 (Arg-292) interacts with NADP(+). The segment at 322–347 is linker; it reads ETTEETGDVDSTDTTDWSTAMTDAKN. Residues 341–455 enclose the Thioredoxin domain; that stretch reads AMTDAKNAGV…LLRDLSDVVP (115 aa). Residues Cys-379 and Cys-382 are joined by a disulfide bond.

In the N-terminal section; belongs to the class-II pyridine nucleotide-disulfide oxidoreductase family. Homodimer. The cofactor is FAD.

The protein localises to the cytoplasm. The catalysed reaction is [thioredoxin]-dithiol + NADP(+) = [thioredoxin]-disulfide + NADPH + H(+). The polypeptide is Bifunctional thioredoxin reductase/thioredoxin (trxB/A) (Mycobacterium leprae (strain TN)).